The chain runs to 504 residues: uncharacterized protein (504 aa).

The disordered stretch occupies residues 431-483; the sequence is GEAEKYRKLQDGDEDEEGTGKPEPKKARRKGFGGKFAPKHEEKVTRAVGVNSE.

This sequence belongs to the CBF/MAK21 family.

This is an uncharacterized protein from Caenorhabditis elegans.